Reading from the N-terminus, the 96-residue chain is Putative regulatory protein Teth514_1762 (96 aa).

Belongs to the RemA family.

The sequence is that of Putative regulatory protein Teth514_1762 from Thermoanaerobacter sp. (strain X514).